Consider the following 484-residue polypeptide: Argininosuccinate lyase (484 aa).

The protein belongs to the lyase 1 family. Argininosuccinate lyase subfamily.

Its subcellular location is the cytoplasm. The catalysed reaction is 2-(N(omega)-L-arginino)succinate = fumarate + L-arginine. It functions in the pathway amino-acid biosynthesis; L-arginine biosynthesis; L-arginine from L-ornithine and carbamoyl phosphate: step 3/3. The polypeptide is Argininosuccinate lyase (Methanocaldococcus jannaschii (strain ATCC 43067 / DSM 2661 / JAL-1 / JCM 10045 / NBRC 100440) (Methanococcus jannaschii)).